A 413-amino-acid polypeptide reads, in one-letter code: L-cysteine:1D-myo-inositol 2-amino-2-deoxy-alpha-D-glucopyranoside ligase (413 aa).

Zn(2+) is bound at residue Cys15. L-cysteinyl-5'-AMP is bound by residues Cys15–Thr18, Thr30, and Asn53–Thr55. Positions Ile17–His27 match the 'HIGH' region motif. Positions Glu155 to Pro160 match the 'ERGGDP' region motif. An L-cysteinyl-5'-AMP-binding site is contributed by Trp195. Cys199 contacts Zn(2+). Gly217–Asp219 contacts L-cysteinyl-5'-AMP. Residue His224 coordinates Zn(2+). Val251 contacts L-cysteinyl-5'-AMP. The 'KMSKS' region motif lies at Lys257 to Ser261.

This sequence belongs to the class-I aminoacyl-tRNA synthetase family. MshC subfamily. In terms of assembly, monomer. Zn(2+) serves as cofactor.

It carries out the reaction 1D-myo-inositol 2-amino-2-deoxy-alpha-D-glucopyranoside + L-cysteine + ATP = 1D-myo-inositol 2-(L-cysteinylamino)-2-deoxy-alpha-D-glucopyranoside + AMP + diphosphate + H(+). In terms of biological role, catalyzes the ATP-dependent condensation of GlcN-Ins and L-cysteine to form L-Cys-GlcN-Ins. In Frankia alni (strain DSM 45986 / CECT 9034 / ACN14a), this protein is L-cysteine:1D-myo-inositol 2-amino-2-deoxy-alpha-D-glucopyranoside ligase.